A 139-amino-acid polypeptide reads, in one-letter code: D-ribose pyranase (139 aa).

Histidine 20 functions as the Proton donor in the catalytic mechanism. Substrate contacts are provided by residues aspartate 28, histidine 106, and 128-130 (YAN).

This sequence belongs to the RbsD / FucU family. RbsD subfamily. In terms of assembly, homodecamer.

It is found in the cytoplasm. It carries out the reaction beta-D-ribopyranose = beta-D-ribofuranose. It participates in carbohydrate metabolism; D-ribose degradation; D-ribose 5-phosphate from beta-D-ribopyranose: step 1/2. In terms of biological role, catalyzes the interconversion of beta-pyran and beta-furan forms of D-ribose. The chain is D-ribose pyranase from Citrobacter koseri (strain ATCC BAA-895 / CDC 4225-83 / SGSC4696).